Reading from the N-terminus, the 458-residue chain is NADH-quinone oxidoreductase subunit N 1 (458 aa).

14 helical membrane passes run 12 to 32, 37 to 57, 70 to 90, 101 to 121, 124 to 144, 159 to 179, 199 to 219, 230 to 250, 266 to 286, 293 to 313, 321 to 341, 361 to 381, 393 to 413, and 438 to 458; these read ALIPEITLTGFASLILLAGLL, EVLVWSSVLFLVIFAFFIPSF, FLTIYLKLIIIIGTIISLLVL, FNESIAFILFSALGMMLLVSA, LISFFLSFELMSLSIYVLVGI, FMLGGFSSAIMLFGIAFIYGA, ILIGLGLFIVGLCFKIALVPF, APTPVTAFISTLPKVAILGAF, SNFLIVLSIATMATGNFFALI, MLAYSSIAHAGYIIIGVIVGT, VAYMFIYTLMNIGAFAMVIAF, IAMLIFMFSLTGVPPTAGFIV, GFTWLVVIAVIFTVISAYYYL, and VAILICTIGVTFLGILPLFLI.

The protein belongs to the complex I subunit 2 family. In terms of assembly, NDH-1 is composed of 14 different subunits. Subunits NuoA, H, J, K, L, M, N constitute the membrane sector of the complex.

It localises to the cell inner membrane. The enzyme catalyses a quinone + NADH + 5 H(+)(in) = a quinol + NAD(+) + 4 H(+)(out). Its function is as follows. NDH-1 shuttles electrons from NADH, via FMN and iron-sulfur (Fe-S) centers, to quinones in the respiratory chain. The immediate electron acceptor for the enzyme in this species is believed to be ubiquinone. Couples the redox reaction to proton translocation (for every two electrons transferred, four hydrogen ions are translocated across the cytoplasmic membrane), and thus conserves the redox energy in a proton gradient. This is NADH-quinone oxidoreductase subunit N 1 from Thermodesulfovibrio yellowstonii (strain ATCC 51303 / DSM 11347 / YP87).